Consider the following 467-residue polypeptide: MSSILPFTPPVVKRLLGWKKSAGGSGGAGGGEQNGQEEKWCEKAVKSLVKKLKKTGRLDELEKAITTQNCNTKCVTIPSTCSEIWGLSTANTVDQWDTTGLYSFSEQTRSLDGRLQVSHRKGLPHVIYCRLWRWPDLHSHHELKAIENCEYAFNLKKDEVCVNPYHYQRVETPVLPPVLVPRHTEILTELPPLDDYTHSIPENTNFPAGIEPQSNYIPETPPPGYISEDGETSDQQLNQSMDTGSPAELSPTTLSPVNHSLDLQPVTYSEPAFWCSIAYYELNQRVGETFHASQPSLTVDGFTDPSNSERFCLGLLSNVNRNATVEMTRRHIGRGVRLYYIGGEVFAECLSDSAIFVQSPNCNQRYGWHPATVCKIPPGCNLKIFNNQEFAALLAQSVNQGFEAVYQLTRMCTIRMSFVKGWGAEYRRQTVTSTPCWIELHLNGPLQWLDKVLTQMGSPSVRCSSMS.

N-acetylserine is present on serine 2. Threonine 8 carries the phosphothreonine modification. One can recognise an MH1 domain in the interval 10–176 (PVVKRLLGWK…YQRVETPVLP (167 aa)). Lysine 19 bears the N6-acetyllysine mark. 4 residues coordinate Zn(2+): cysteine 74, cysteine 149, cysteine 161, and histidine 166. Residues 207-217 (PAGIEPQSNYI) show a composition bias toward polar residues. A disordered region spans residues 207 to 251 (PAGIEPQSNYIPETPPPGYISEDGETSDQQLNQSMDTGSPAELSP). Threonine 220 is modified (phosphothreonine). Residues 221–225 (PPPGY) carry the PY-motif motif. Residues 233 to 243 (SDQQLNQSMDT) show a composition bias toward polar residues. Serine 240 is subject to Phosphoserine; by CAMK2. Serine 245, serine 250, serine 255, serine 458, serine 460, and serine 464 each carry phosphoserine. One can recognise an MH2 domain in the interval 274–467 (WCSIAYYELN…SPSVRCSSMS (194 aa)). Residues serine 465 and serine 467 each carry the phosphoserine; by TGFBR1 modification.

This sequence belongs to the dwarfin/SMAD family. Monomer; in the absence of TGF-beta. Heterodimer; in the presence of TGF-beta. Forms a heterodimer with co-SMAD, SMAD4, in the nucleus to form the transactivation complex SMAD2/SMAD4. Found in a complex with SMAD3 and TRIM33 upon addition of TGF-beta. Identified in a complex that contains at least ZNF451, SMAD2, SMAD3 and SMAD4. Interacts (via the MH2 domain) with ZFYVE9; may form trimers with the SMAD4 co-SMAD. Interacts with TAZ/WWRT1. Interacts with FOXH1. Interacts with SNW1. Interacts with CREB-binding protein (CBP) and EP300. Interacts with SNON. Interacts with ALK4/ACVR1B. Interacts with SKOR1. Interacts with SKOR2. Interacts with PRDM16. Interacts (via MH2 domain) with LEMD3. Interacts with RBPMS. Interacts with WWP1. Interacts (dephosphorylated form, via the MH1 and MH2 domains) with RANBP3 (via its C-terminal R domain); the interaction results in the export of dephosphorylated SMAD3 out of the nucleus and termination of the TGF-beta signaling. Interacts with PDPK1 (via PH domain). Interacts with DAB2; the interactions are enhanced upon TGF-beta stimulation. Interacts with USP15. Interacts with PPP5C. Interacts with LDLRAD4 (via the SMAD interaction motif). Interacts (via MH2 domain) with PMEPA1 (via the SMAD interaction motif). Interacts with ZFHX3. Interacts with ZNF451. Interacts with SMURF2 when phosphorylated on Ser-465/467. Interacts with PPM1A. Interacts with TGF-beta. Interacts with TGFBR1. Interacts with TGIF. Interacts with SMAD3 and TRIM33. Interacts with ZNF580. Interacts with NEDD4L in response to TGF-beta. Interacts with HGS. Interacts with AIP1. Interacts with WWP1. Interacts with PML. Interacts weakly with ZNF8. Interacts (when phosphorylated) with RNF111; RNF111 acts as an enhancer of the transcriptional responses by mediating ubiquitination and degradation of SMAD2 inhibitors. Interacts with YAP1 (when phosphorylated at 'Ser-112'). Interacts when phosphorylated with IPO7; the interaction facilitates translocation of SMAD2 to the nucleus. Interacts with MTMR4; negatively regulates TGF-beta signaling through SMAD2 dephosphorylation and retention in endosomes. Post-translationally, in response to TGF-beta, phosphorylated on the C-terminal SXS motif by TGF-beta and activin type 1 receptor kinases, phosphorylation declines progressively in a KMT5A-dependent manner. Phosphorylation in this motif is required for interaction with a number of proteins including SMURF2, SNON and SMAD4 in response to TGF-beta. Dephosphorylated in this motif by PPM1A leading to disruption of the SMAD2/3-SMAD4 complex, nuclear export and termination of the TGF-beta signaling. In response to decorin, the naturally occurring inhibitor of TGF-beta signaling, phosphorylated on Ser-240 by CaMK2. Phosphorylated by MAPK3 upon EGF stimulation; which increases transcriptional activity and stability, and is blocked by calmodulin. Phosphorylated by PDPK1. In response to TGF-beta, ubiquitinated by NEDD4L; which promotes its degradation. Monoubiquitinated, leading to prevent DNA-binding. Deubiquitination by USP15 alleviates inhibition and promotes activation of TGF-beta target genes. Ubiquitinated by RNF111, leading to its degradation: only SMAD2 proteins that are 'in use' are targeted by RNF111, RNF111 playing a key role in activating SMAD2 and regulating its turnover. In terms of processing, acetylated on Lys-19 by coactivators in response to TGF-beta signaling, which increases transcriptional activity.

The protein localises to the cytoplasm. The protein resides in the nucleus. Receptor-regulated SMAD (R-SMAD) that is an intracellular signal transducer and transcriptional modulator activated by TGF-beta (transforming growth factor) and activin type 1 receptor kinases. Binds the TRE element in the promoter region of many genes that are regulated by TGF-beta and, on formation of the SMAD2/SMAD4 complex, activates transcription. Promotes TGFB1-mediated transcription of odontoblastic differentiation genes in dental papilla cells. Positively regulates PDPK1 kinase activity by stimulating its dissociation from the 14-3-3 protein YWHAQ which acts as a negative regulator. The polypeptide is Mothers against decapentaplegic homolog 2 (Smad2) (Mus musculus (Mouse)).